The sequence spans 237 residues: Ribosomal RNA small subunit methyltransferase G (237 aa).

S-adenosyl-L-methionine contacts are provided by residues Gly75, Phe80, 127 to 128 (AE), and Arg146.

This sequence belongs to the methyltransferase superfamily. RNA methyltransferase RsmG family.

The protein localises to the cytoplasm. Its function is as follows. Specifically methylates the N7 position of a guanine in 16S rRNA. This is Ribosomal RNA small subunit methyltransferase G from Synechococcus sp. (strain RCC307).